A 305-amino-acid chain; its full sequence is Tyrosine recombinase XerD (305 aa).

The region spanning 2–87 (SQGEAWADAF…AVRQFYRFVL (86 aa)) is the Core-binding (CB) domain. Residues 108–295 (PLPKVLERDE…AGEHLAHIVQ (188 aa)) form the Tyr recombinase domain. Residues Arg-149, Lys-173, His-247, Arg-250, and His-273 contribute to the active site. The active-site O-(3'-phospho-DNA)-tyrosine intermediate is the Tyr-282.

It belongs to the 'phage' integrase family. XerD subfamily. In terms of assembly, forms a cyclic heterotetrameric complex composed of two molecules of XerC and two molecules of XerD.

The protein localises to the cytoplasm. In terms of biological role, site-specific tyrosine recombinase, which acts by catalyzing the cutting and rejoining of the recombining DNA molecules. The XerC-XerD complex is essential to convert dimers of the bacterial chromosome into monomers to permit their segregation at cell division. It also contributes to the segregational stability of plasmids. This is Tyrosine recombinase XerD from Caulobacter vibrioides (strain ATCC 19089 / CIP 103742 / CB 15) (Caulobacter crescentus).